Reading from the N-terminus, the 1216-residue chain is Coatomer subunit alpha-1 (1216 aa).

WD repeat units lie at residues 7 to 48 (TKSN…DRFD), 49 to 88 (EHEGPVRGVHFHNSQPLFVSGGDDYKIKVWNYKNHRCLFT), 91 to 132 (GHLD…SVLT), 133 to 172 (GHNHYVMCASFHPKEDLVVSASLDQTVRVWDIGALRKKTV), 202 to 241 (GHDRGVNWAAFHPTLPLIVSGADDRQVKLWRMNETKAWEV), 246 to 285 (GHMNNVSSVMFHAKQDIIVSNSEDKSIRVWDATKRTGLQT), 288 to 326 (REHDRFWILAVHPEMNLLAAGHDSGMIVFKLERERPAFA), and 363 to 404 (SLNQ…VGRS).

Oligomeric complex that consists of at least the alpha, beta, beta', gamma, delta, epsilon and zeta subunits.

It is found in the cytoplasm. Its subcellular location is the golgi apparatus membrane. The protein localises to the cytoplasmic vesicle. The protein resides in the COPI-coated vesicle membrane. Functionally, the coatomer is a cytosolic protein complex that binds to dilysine motifs and reversibly associates with Golgi non-clathrin-coated vesicles, which further mediate biosynthetic protein transport from the ER, via the Golgi up to the trans Golgi network. Coatomer complex is required for budding from Golgi membranes, and is essential for the retrograde Golgi-to-ER transport of dilysine-tagged proteins. The sequence is that of Coatomer subunit alpha-1 from Arabidopsis thaliana (Mouse-ear cress).